The sequence spans 297 residues: Adrenocorticotropic hormone receptor (297 aa).

Residues 1 to 23 are Extracellular-facing; that stretch reads MKHIINSYENINNTARNNSDCPR. N-linked (GlcNAc...) asparagine glycosylation is found at Asn12 and Asn17. Disulfide bonds link Cys21–Cys253 and Cys245–Cys251. A helical transmembrane segment spans residues 24–49; the sequence is VVLPEEIFFTISIVGVLENLIVLLAV. Topologically, residues 50–58 are cytoplasmic; it reads FKNKNLQAP. Residues 59-79 form a helical membrane-spanning segment; sequence MYFFICSLAISDMLGSLYKIL. Residues 80 to 104 lie on the Extracellular side of the membrane; that stretch reads ENILIILRNMGYLKPRGSFETTADD. The chain crosses the membrane as a helical span at residues 105-126; it reads IIDSLFVLSLLGSIFSLSVIAA. Topologically, residues 127-147 are cytoplasmic; that stretch reads DRYITIFHALRYHSIVTMRRT. A helical membrane pass occupies residues 148-168; that stretch reads VVVLTVIWTFCTGTGITMVIF. The Extracellular portion of the chain corresponds to 169-180; sequence SHHVPTVITFTS. Residues 181 to 199 traverse the membrane as a helical segment; that stretch reads LFPLMLVFILCLYVHMFLL. The Cytoplasmic portion of the chain corresponds to 200-217; that stretch reads ARSHTRKISTLPRANMKG. The helical transmembrane segment at 218–244 threads the bilayer; that stretch reads AITLTILLGVFIFCWAPFVLHVLLMTF. Over 245–256 the chain is Extracellular; that stretch reads CPSNPYCACYMS. A helical membrane pass occupies residues 257–278; that stretch reads LFQVNGMLIMCNAVIDPFIYAF. Over 279 to 297 the chain is Cytoplasmic; it reads RSPELRDAFKKMIFCSRYW. A lipid anchor (S-palmitoyl cysteine) is attached at Cys293.

This sequence belongs to the G-protein coupled receptor 1 family. As to quaternary structure, homodimer. Interacts with corticotropin (ACTH). Interacts with MRAP; this interaction targets MC2R to the plasma membrane. Interacts with MRAP2; competing with MRAP for binding to MC2R and impairing the binding of corticotropin (ACTH). Post-translationally, ubiquitinated by MGRN1 that may be involved in post-endocytic trafficking and/or degradation of internalized receptor. Melanocytes and corticoadrenal tissue.

Its subcellular location is the cell membrane. In terms of biological role, hormone receptor primarily expressed in adrenal cortex that plays a key role in regulating adrenocortical function. Upon corticotropin (ACTH) binding, facilitates the release of adrenal glucocorticoids, including cortisol and corticosterone. In addition, MC2R is required for fetal and neonatal adrenal gland development. Mechanistically, activates adenylate cyclase (cAMP), the MAPK cascade as well as the cAMP-dependent protein kinase A pathway leading to steroidogenic factor 1/NR5A1-mediated transcriptional activation. This is Adrenocorticotropic hormone receptor (MC2R) from Homo sapiens (Human).